The following is a 365-amino-acid chain: Peptide chain release factor 2 (365 aa).

At Q252 the chain carries N5-methylglutamine.

This sequence belongs to the prokaryotic/mitochondrial release factor family. Methylated by PrmC. Methylation increases the termination efficiency of RF2.

It is found in the cytoplasm. Functionally, peptide chain release factor 2 directs the termination of translation in response to the peptide chain termination codons UGA and UAA. The protein is Peptide chain release factor 2 of Escherichia coli (strain K12 / MC4100 / BW2952).